Consider the following 1151-residue polypeptide: ATP-dependent RNA helicase ddx46 (1151 aa).

Composition is skewed to basic and acidic residues over residues 1–26 (MDEY…DNRN) and 35–51 (YRDD…DRSH). Disordered stretches follow at residues 1–138 (MDEY…SRFD), 166–224 (MYQQ…VFQQ), 287–358 (QELK…PLVN), and 424–449 (TSQM…DKTI). A compositionally biased stretch (low complexity) spans 52-73 (YNNNNNNNNNNNNNNNNNNGNG). Positions 81 to 90 (SSQNKYQNHH) are enriched in polar residues. Low complexity-rich tracts occupy residues 91–124 (QQSP…QPHI), 166–199 (MYQQ…FQHH), 207–224 (QPPV…VFQQ), and 291–339 (ASGS…TTSP). Acidic residues predominate over residues 428–443 (IDDDEKLEEESEGEDD). The Q motif motif lies at 509-537 (QSWAQAGLTEKVHLLLKKFQYEKPTSIQA). Residues 540–718 (IPAIMNGRDL…KKILNKPLEI (179 aa)) enclose the Helicase ATP-binding domain. An ATP-binding site is contributed by 553–560 (ARTGSGKT). Positions 666–669 (DEAD) match the DEAD box motif. Residues 729 to 890 (DIEQFVEVRP…KVPDELRKLN (162 aa)) enclose the Helicase C-terminal domain. Residues 904-972 (LLAPTGFTGR…EKEKQLLSEK (69 aa)) form a disordered region. Positions 915–930 (HKFDAAEEDKKNIERK) are enriched in basic and acidic residues. Residues 938–948 (IEEEEEEEDED) show a composition bias toward acidic residues. Basic and acidic residues predominate over residues 949 to 972 (KEKAEKEKLAAASAEKEKQLLSEK).

It belongs to the DEAD box helicase family. DDX46/PRP5 subfamily. In terms of assembly, component of the 17S U2 SnRNP complex, a ribonucleoprotein complex that contains small nuclear RNA (snRNA) U2 and a number of specific proteins.

The protein resides in the nucleus speckle. The catalysed reaction is ATP + H2O = ADP + phosphate + H(+). In terms of biological role, component of the 17S U2 SnRNP complex of the spliceosome, a large ribonucleoprotein complex that removes introns from transcribed pre-mRNAs. The chain is ATP-dependent RNA helicase ddx46 (helB1) from Dictyostelium discoideum (Social amoeba).